The following is a 484-amino-acid chain: Allantoinase, mitochondrial (484 aa).

H76, H78, K163, H199, H251, and D324 together coordinate Zn(2+). K163 is modified (N6-carboxylysine).

This sequence belongs to the metallo-dependent hydrolases superfamily. Allantoinase family. As to quaternary structure, homotetramer. It depends on Zn(2+) as a cofactor. In terms of processing, carboxylation allows a single lysine to coordinate two zinc ions. In terms of tissue distribution, liver and kidney.

It localises to the mitochondrion. The catalysed reaction is (S)-allantoin + H2O = allantoate + H(+). Its pathway is nitrogen metabolism; (S)-allantoin degradation; allantoate from (S)-allantoin: step 1/1. The protein is Allantoinase, mitochondrial (ALN) of Aquarana catesbeiana (American bullfrog).